Here is a 328-residue protein sequence, read N- to C-terminus: Mitochondrial GTPase 1 (328 aa).

The CP-type G domain maps to 10 to 199 (KTTLKRLRDS…MVDTPGIMLP (190 aa)). GTP contacts are provided by residues 57–60 (NKCD), 143–148 (NVGKSS), and G195.

The protein belongs to the TRAFAC class YlqF/YawG GTPase family. MTG1 subfamily.

Its subcellular location is the mitochondrion inner membrane. Its function is as follows. Mitochondrial GTPase involved in assembly of the large ribosomal subunit. Plays a role in expression of the mitochondrial translational machinery. The sequence is that of Mitochondrial GTPase 1 from Schizosaccharomyces japonicus (strain yFS275 / FY16936) (Fission yeast).